The primary structure comprises 192 residues: 7-methyl-GTP pyrophosphatase (192 aa).

Asp69 serves as the catalytic Proton acceptor.

Belongs to the Maf family. YceF subfamily. A divalent metal cation serves as cofactor.

It is found in the cytoplasm. It catalyses the reaction N(7)-methyl-GTP + H2O = N(7)-methyl-GMP + diphosphate + H(+). Nucleoside triphosphate pyrophosphatase that hydrolyzes 7-methyl-GTP (m(7)GTP). May have a dual role in cell division arrest and in preventing the incorporation of modified nucleotides into cellular nucleic acids. The protein is 7-methyl-GTP pyrophosphatase of Pseudomonas fluorescens (strain Pf0-1).